Reading from the N-terminus, the 95-residue chain is Co-chaperonin GroES (95 aa).

The protein belongs to the GroES chaperonin family. Heptamer of 7 subunits arranged in a ring. Interacts with the chaperonin GroEL.

It localises to the cytoplasm. Together with the chaperonin GroEL, plays an essential role in assisting protein folding. The GroEL-GroES system forms a nano-cage that allows encapsulation of the non-native substrate proteins and provides a physical environment optimized to promote and accelerate protein folding. GroES binds to the apical surface of the GroEL ring, thereby capping the opening of the GroEL channel. This is Co-chaperonin GroES from Bordetella bronchiseptica (strain ATCC BAA-588 / NCTC 13252 / RB50) (Alcaligenes bronchisepticus).